We begin with the raw amino-acid sequence, 124 residues long: Putative RNA polymerase II transcriptional coactivator (124 aa).

Positions 1–61 (MSSSSSSEDE…GRLKDSDGNE (61 aa)) are disordered. Composition is skewed to basic and acidic residues over residues 11–21 (LEKKVTKEQKK) and 39–58 (QEVKKAKNEEEVSGRLKDSD).

It belongs to the transcriptional coactivator PC4 family.

The protein resides in the nucleus. Its function is as follows. General coactivator that functions cooperatively with TAFs and mediates functional interactions between upstream activators and the general transcriptional machinery. Binds single-stranded DNA. The polypeptide is Putative RNA polymerase II transcriptional coactivator (Caenorhabditis elegans).